A 1783-amino-acid chain; its full sequence is 6-methylsalicylic acid synthase (1783 aa).

A compositionally biased stretch (polar residues) spans 1 to 31; that stretch reads MITSTSSTEVLTPANGSDDSKGTTTPATSSG. The disordered stretch occupies residues 1 to 40; it reads MITSTSSTEVLTPANGSDDSKGTTTPATSSGDPEMHDDLL. The Ketosynthase family 3 (KS3) domain maps to 45-474; the sequence is HDDVAIIGMA…GTVSHAIIEA (430 aa). Catalysis depends on for beta-ketoacyl synthase activity residues cysteine 217, histidine 352, and histidine 394. The segment at 587 to 884 is malonyl-CoA:ACP transacylase (MAT) domain; it reads WVFSGHGAQW…TPTMVRKQPA (298 aa). Serine 673 functions as the For acyl/malonyl transferase activity in the catalytic mechanism. The interval 942–1215 is product template (PT) domain; it reads THKPAANDLL…AFAGVEGESL (274 aa). Residues 948–1064 form an N-terminal hotdog fold region; it reads NDLLGTRTAL…ATVGADATPS (117 aa). The 269-residue stretch at 948–1216 folds into the PKS/mFAS DH domain; the sequence is NDLLGTRTAL…FAGVEGESLS (269 aa). The active-site Proton acceptor; for dehydratase activity is the histidine 980. The tract at residues 1078–1216 is C-terminal hotdog fold; the sequence is PQKLSDSFSI…FAGVEGESLS (139 aa). Residue aspartate 1130 is the Proton donor; for dehydratase activity of the active site. The Carrier domain maps to 1707-1781; it reads EYVLVVVKKC…HLVEYFCQVL (75 aa). Residue serine 1741 is modified to O-(pantetheine 4'-phosphoryl)serine.

It catalyses the reaction 3 malonyl-CoA + acetyl-CoA + NADPH + 3 H(+) = 6-methylsalicylate + 3 CO2 + NADP(+) + 4 CoA + H2O. Its pathway is secondary metabolite biosynthesis; terpenoid biosynthesis. Functionally, non-reducing polyketide synthase; part of the gene cluster that mediates the biosynthesis of macrophorins, isoprenoid epoxycyclohexenones containing cyclized drimane moieties. The first step of the pathway is the synthesis of 6-methylsalicylic acid (6-MSA) by the polyketide synthase macA. 6-MSA is then converted to m-cresol by the decarboxylase macB. The cytochrome P450 monooxygenase macC then catalyzes the oxidation of m-cresol to toluquinol. Epoxidation of toluquinol is then performed by the short chain dehydrogenase macD, with the help of macE, and a further prenylation by macG leads to 7-deacetoxyyanuthone A. The next step is the hydroxylation of C-22 of 7-deacetoxyyanuthone A by the cytochrome P450 monooxygenase macH to yield 22-deacetylyanuthone A. O-Mevalon transferase macI then attaches mevalon to the hydroxyl group of 22-deacetylyanuthone A to produce yanuthone E. The terpene cyclase macJ catalyzes the cyclization of 22-deacetylyanuthone A to macrophorin A. MacJ is also able to catalyze cyclization of yanuthone E and 7-deacetoxyyanuthone A to their corresponding macrophorins. The macJ products can be further modified by macH and macJ, as well as by the FAD-dependent monooxygenase macF, to produce additional macrophorins, including 4'-oxomacrophorin A, 4'-oxomacrophorin D and 4'-oxomacrophorin E. The sequence is that of 6-methylsalicylic acid synthase from Penicillium terrestre.